Here is a 319-residue protein sequence, read N- to C-terminus: Histone-lysine N-methyltransferase set5 (319 aa).

The SET domain maps to Tyr4 to Ile141. Ser316 carries the phosphoserine modification. Thr318 is modified (phosphothreonine).

This sequence belongs to the class V-like SAM-binding methyltransferase superfamily.

Its subcellular location is the nucleus. It localises to the chromosome. It is found in the cytoplasm. The enzyme catalyses L-lysyl-[histone] + S-adenosyl-L-methionine = N(6)-methyl-L-lysyl-[histone] + S-adenosyl-L-homocysteine + H(+). Histone methyltransferase that monomethylates 'Lys-5', 'Lys-8' and 'Lys-12' of histone H4 (H4K5me1, H4K8me1 and H4K12me1, respectively), thereby controlling gene expression and remodeling chromatin structures. Monomethylation of 'Lys-5' of histone H4 (H4K5me1) is required for subsequent acetylation and formation of N6-acetyl-N6-methyllysine (H4K5acme). This chain is Histone-lysine N-methyltransferase set5 (set5), found in Schizosaccharomyces pombe (strain 972 / ATCC 24843) (Fission yeast).